The primary structure comprises 53 residues: UPF0391 membrane protein Bxeno_A2958 (53 aa).

The next 2 helical transmembrane spans lie at 5 to 25 and 30 to 50; these read AIVF…GIAA and IAKI…LLGV.

The protein belongs to the UPF0391 family.

The protein resides in the cell membrane. This Paraburkholderia xenovorans (strain LB400) protein is UPF0391 membrane protein Bxeno_A2958.